A 306-amino-acid chain; its full sequence is Pseudouridine-5'-phosphate glycosidase (306 aa).

Glutamate 27 functions as the Proton donor in the catalytic mechanism. Residues lysine 88 and valine 108 each coordinate substrate. Aspartate 140 lines the Mn(2+) pocket. 142–144 (SAD) provides a ligand contact to substrate. Lysine 161 serves as the catalytic Nucleophile.

This sequence belongs to the pseudouridine-5'-phosphate glycosidase family. Homotrimer. Mn(2+) is required as a cofactor.

The catalysed reaction is D-ribose 5-phosphate + uracil = psi-UMP + H2O. Catalyzes the reversible cleavage of pseudouridine 5'-phosphate (PsiMP) to ribose 5-phosphate and uracil. Functions biologically in the cleavage direction, as part of a pseudouridine degradation pathway. The polypeptide is Pseudouridine-5'-phosphate glycosidase (Petrotoga mobilis (strain DSM 10674 / SJ95)).